Consider the following 146-residue polypeptide: Large ribosomal subunit protein uL15 (146 aa).

The segment at 1–46 (MAIELHDLKPAPGAHKAKTRVGRGEGSKGKTAGRGTKGTGARKNVP) is disordered. Positions 29-43 (GKTAGRGTKGTGARK) are enriched in low complexity.

This sequence belongs to the universal ribosomal protein uL15 family. In terms of assembly, part of the 50S ribosomal subunit.

Its function is as follows. Binds to the 23S rRNA. The chain is Large ribosomal subunit protein uL15 from Cutibacterium acnes (strain DSM 16379 / KPA171202) (Propionibacterium acnes).